Here is a 591-residue protein sequence, read N- to C-terminus: Aspartate--tRNA(Asp/Asn) ligase (591 aa).

Residue Glu175 coordinates L-aspartate. The segment at 199-202 (QQFK) is aspartate. L-aspartate contacts are provided by Arg221 and His453. Position 221–223 (221–223 (RDE)) interacts with ATP. Glu486 is a binding site for ATP. Residue Arg493 coordinates L-aspartate. Position 538–541 (538–541 (GIDR)) interacts with ATP.

Belongs to the class-II aminoacyl-tRNA synthetase family. Type 1 subfamily. In terms of assembly, homodimer.

Its subcellular location is the cytoplasm. It catalyses the reaction tRNA(Asx) + L-aspartate + ATP = L-aspartyl-tRNA(Asx) + AMP + diphosphate. Aspartyl-tRNA synthetase with relaxed tRNA specificity since it is able to aspartylate not only its cognate tRNA(Asp) but also tRNA(Asn). Reaction proceeds in two steps: L-aspartate is first activated by ATP to form Asp-AMP and then transferred to the acceptor end of tRNA(Asp/Asn). In Paracoccus denitrificans (strain Pd 1222), this protein is Aspartate--tRNA(Asp/Asn) ligase.